The primary structure comprises 202 residues: ATP-dependent Clp protease proteolytic subunit (202 aa).

Ser101 serves as the catalytic Nucleophile. The active site involves His126.

The protein belongs to the peptidase S14 family. Component of the chloroplastic Clp protease core complex.

The protein resides in the plastid. The protein localises to the chloroplast stroma. It carries out the reaction Hydrolysis of proteins to small peptides in the presence of ATP and magnesium. alpha-casein is the usual test substrate. In the absence of ATP, only oligopeptides shorter than five residues are hydrolyzed (such as succinyl-Leu-Tyr-|-NHMec, and Leu-Tyr-Leu-|-Tyr-Trp, in which cleavage of the -Tyr-|-Leu- and -Tyr-|-Trp bonds also occurs).. Its function is as follows. Cleaves peptides in various proteins in a process that requires ATP hydrolysis. Has a chymotrypsin-like activity. Plays a major role in the degradation of misfolded proteins. The chain is ATP-dependent Clp protease proteolytic subunit from Buxus microphylla (Littleleaf boxwood).